The sequence spans 189 residues: Interferon alpha-7 (189 aa).

Positions 1–23 are cleaved as a signal peptide; the sequence is MARSFSLLMVVLVLSYKSICSLG. Intrachain disulfides connect C24–C122 and C52–C162.

It belongs to the alpha/beta interferon family.

Its subcellular location is the secreted. In terms of biological role, produced by macrophages, IFN-alpha have antiviral activities. Interferon stimulates the production of two enzymes: a protein kinase and an oligoadenylate synthetase. In Homo sapiens (Human), this protein is Interferon alpha-7 (IFNA7).